The primary structure comprises 126 residues: Aspartate 1-decarboxylase (126 aa).

Ser-25 serves as the catalytic Schiff-base intermediate with substrate; via pyruvic acid. The residue at position 25 (Ser-25) is a Pyruvic acid (Ser). A substrate-binding site is contributed by Thr-57. Tyr-58 functions as the Proton donor in the catalytic mechanism. Position 73–75 (Gly-73–Ala-75) interacts with substrate.

Belongs to the PanD family. Heterooctamer of four alpha and four beta subunits. Requires pyruvate as cofactor. Post-translationally, is synthesized initially as an inactive proenzyme, which is activated by self-cleavage at a specific serine bond to produce a beta-subunit with a hydroxyl group at its C-terminus and an alpha-subunit with a pyruvoyl group at its N-terminus.

It localises to the cytoplasm. It carries out the reaction L-aspartate + H(+) = beta-alanine + CO2. It functions in the pathway cofactor biosynthesis; (R)-pantothenate biosynthesis; beta-alanine from L-aspartate: step 1/1. In terms of biological role, catalyzes the pyruvoyl-dependent decarboxylation of aspartate to produce beta-alanine. The sequence is that of Aspartate 1-decarboxylase from Stutzerimonas stutzeri (strain A1501) (Pseudomonas stutzeri).